The sequence spans 586 residues: A-type ATP synthase subunit A (586 aa).

Residue 238–245 (GPFGSGKT) coordinates ATP.

Belongs to the ATPase alpha/beta chains family. Has multiple subunits with at least A(3), B(3), C, D, E, F, H, I and proteolipid K(x).

It is found in the cell membrane. It carries out the reaction ATP + H2O + 4 H(+)(in) = ADP + phosphate + 5 H(+)(out). Its function is as follows. Component of the A-type ATP synthase that produces ATP from ADP in the presence of a proton gradient across the membrane. The A chain is the catalytic subunit. The chain is A-type ATP synthase subunit A from Haloferax volcanii (strain ATCC 29605 / DSM 3757 / JCM 8879 / NBRC 14742 / NCIMB 2012 / VKM B-1768 / DS2) (Halobacterium volcanii).